The primary structure comprises 507 residues: Myocyte-specific enhancer factor 2D (507 aa).

The MADS-box domain occupies 3–57 (RKKIQIQRITDERNRQVTFTKRKFGLMKKAYELSVLCDCEIALIIFNHSNKLFQY). The mef2-type DNA-binding region spans 58–86 (ASTDMDKVLLKYTEYNEPHESRTNADIIE). Phosphoserine is present on residues S98, S106, S110, S121, and S180. A disordered region spans residues 174-207 (TDPRLLSPQQPALQRNSVSPGLPQRPASAGAMLG). The span at 180–192 (SPQQPALQRNSVS) shows a compositional bias: polar residues. Position 190 is a phosphoserine; by PKA (S190). S231 bears the Phosphoserine mark. Disordered regions lie at residues 244-267 (NKVIPAKSPPPPTHNTQLGAPSRK), 357-392 (WQQPQQPQQPQPPQPPQSQPQPPQPQPQQPPQQQPH), and 423-507 (SIKS…WTLK). At K245 the chain carries N6-acetyllysine. A Phosphoserine modification is found at S251. The segment covering 363-389 (PQQPQPPQPPQSQPQPPQPQPQQPPQQ) has biased composition (pro residues). N6-acetyllysine; alternate is present on K425. Residue K425 forms a Glycyl lysine isopeptide (Lys-Gly) (interchain with G-Cter in SUMO); alternate linkage. At S430 the chain carries Phosphoserine.

In terms of assembly, forms a complex with class II HDACs in undifferentiating cells. On myogenic differentiation, HDACs are released into the cytoplasm allowing MEF2s to interact with other proteins for activation. Interacts with HDAC4 (in undifferentiating cells); the interaction translocates MEF2D to nuclear dots. Forms a heterodimer with MEF2A. Interacts with MAPK7; the interaction phosphorylates but does not activate MEF2D. Interacts with MYOG. Interacts with CCAR2 and HDAC3. In terms of processing, phosphorylated on Ser-430 by CDK5 is required for Lys-425 sumoylation and inhibits transcriptional activity. In neurons, enhanced CDK5 activity induced by neurotoxins promotes caspase 3-mediated cleavage leading to neuron apoptosis. Phosphorylation on Ser-180 can be enhanced by EGF. Phosphorylated and activated by CaMK4. Acetylated on Lys-425 by CREBBP. Acetylated by EP300. Deacetylated by SIRT1 and HDAC3. Post-translationally, sumoylated on Lys-425 with SUMO2 but not SUMO1; which inhibits transcriptional activity and myogenic activity. Desumoylated by SENP3.

The protein resides in the nucleus. In terms of biological role, transcriptional activator which binds specifically to the MEF2 element, 5'-YTA[AT](4)TAR-3', found in numerous muscle-specific, growth factor- and stress-induced genes. Mediates cellular functions not only in skeletal and cardiac muscle development, but also in neuronal differentiation and survival. Plays diverse roles in the control of cell growth, survival and apoptosis via p38 MAPK signaling in muscle-specific and/or growth factor-related transcription. Plays a critical role in the regulation of neuronal apoptosis. This chain is Myocyte-specific enhancer factor 2D (Mef2d), found in Rattus norvegicus (Rat).